A 338-amino-acid chain; its full sequence is Glycerol-3-phosphate dehydrogenase [NAD(P)+] (338 aa).

Serine 13, tryptophan 14, and lysine 108 together coordinate NADPH. Sn-glycerol 3-phosphate is bound by residues lysine 108, glycine 139, and serine 141. Alanine 143 is an NADPH binding site. Sn-glycerol 3-phosphate-binding residues include lysine 194, aspartate 247, serine 257, arginine 258, and asparagine 259. The active-site Proton acceptor is the lysine 194. An NADPH-binding site is contributed by arginine 258. NADPH-binding residues include valine 282 and glutamate 284.

The protein belongs to the NAD-dependent glycerol-3-phosphate dehydrogenase family.

The protein resides in the cytoplasm. It catalyses the reaction sn-glycerol 3-phosphate + NAD(+) = dihydroxyacetone phosphate + NADH + H(+). It carries out the reaction sn-glycerol 3-phosphate + NADP(+) = dihydroxyacetone phosphate + NADPH + H(+). Its pathway is membrane lipid metabolism; glycerophospholipid metabolism. Its function is as follows. Catalyzes the reduction of the glycolytic intermediate dihydroxyacetone phosphate (DHAP) to sn-glycerol 3-phosphate (G3P), the key precursor for phospholipid synthesis. This Streptococcus suis (strain 98HAH33) protein is Glycerol-3-phosphate dehydrogenase [NAD(P)+].